A 160-amino-acid chain; its full sequence is S-ribosylhomocysteine lyase (160 aa).

3 residues coordinate Fe cation: His-57, His-61, and Cys-127.

Belongs to the LuxS family. In terms of assembly, homodimer. Fe cation is required as a cofactor.

The enzyme catalyses S-(5-deoxy-D-ribos-5-yl)-L-homocysteine = (S)-4,5-dihydroxypentane-2,3-dione + L-homocysteine. Involved in the synthesis of autoinducer 2 (AI-2) which is secreted by bacteria and is used to communicate both the cell density and the metabolic potential of the environment. The regulation of gene expression in response to changes in cell density is called quorum sensing. Catalyzes the transformation of S-ribosylhomocysteine (RHC) to homocysteine (HC) and 4,5-dihydroxy-2,3-pentadione (DPD). This is S-ribosylhomocysteine lyase from Streptococcus thermophilus (strain CNRZ 1066).